A 510-amino-acid polypeptide reads, in one-letter code: ATP synthase subunit alpha, mitochondrial (510 aa).

171–178 serves as a coordination point for ATP; that stretch reads GDRQTGKT.

In terms of assembly, F-type ATP synthases have 2 components, the catalytic core F(1) and the membrane-embedded component F(0), linked together by a central stalk and a peripheral stalk. The central stalk, also called rotor shaft, is often seen as part of F(1). The peripheral stalk is seen as part of F(0). F(0) contains the membrane channel next to the rotor. F-type ATP synthases form dimers but each monomer functions independently in ATP generation. The dimer consists of 18 different polypeptides: ATP1 (subunit alpha, part of F(1), 3 molecules per monomer), ATP2 (subunit beta, part of F(1), 3 molecules per monomer), ATP3 (subunit gamma, part of the central stalk), ATP4 (subunit b, part of the peripheral stalk), ATP5/OSCP (subunit 5/OSCP, part of the peripheral stalk), ATP6 (subunit a, part of the peripheral stalk), ATP7 (subunit d, part of the peripheral stalk), ATP8 (subunit 8, part of the peripheral stalk), OLI1 (subunit c, part of the rotor, 10 molecules per monomer), ATP14 (subunit h, part of the peripheral stalk), ATP15 (subunit epsilon, part of the central stalk), ATP16 (subunit delta, part of the central stalk), ATP17 (subunit f, part of the peripheral stalk), ATP18 (subunit i/j, part of the peripheral stalk). Dimer-specific subunits are ATP19 (subunit k, at interface between monomers), ATP20 (subunit g, at interface between monomers), TIM11 (subunit e, at interface between monomers). Also contains subunit L.

It localises to the mitochondrion inner membrane. In terms of biological role, mitochondrial membrane ATP synthase (F(1)F(0) ATP synthase or Complex V) produces ATP from ADP in the presence of a proton gradient across the membrane which is generated by electron transport complexes of the respiratory chain. F-type ATP synthases consist of two structural domains, F(1) - containing the extramembraneous catalytic core, and F(0) - containing the membrane proton channel, linked together by a central stalk and a peripheral stalk. During catalysis, ATP synthesis in the catalytic domain of F(1) is coupled via a rotary mechanism of the central stalk subunits to proton translocation. Subunits alpha/ATP1 and beta/ATP2 form the catalytic core in F(1). Rotation of the central stalk against the surrounding alpha/ATP1(3)beta/ATP2(3) subunits leads to hydrolysis of ATP in three separate catalytic sites on the beta/ATP2 subunits. Subunit alpha/ATP1 does not bear the catalytic high-affinity ATP-binding sites. In Pichia angusta (Yeast), this protein is ATP synthase subunit alpha, mitochondrial.